Here is a 396-residue protein sequence, read N- to C-terminus: MTSAVYLQAGRDKSLKRKHPWLFSKAIKKIKGKPGLGDTVTIHDSEGKFLATAAYSPHSQIRARVWSFDEKEVIDQHFFERRLRRALEARSQVIEEGGLTGFRLCAAESDFLPGVTIDKFDNVLVCQLLSAGAERHKGEIVGALMAIFPGMSIYERSDVEVRTKEGLEPIKGALWGNEPTAPVLIAENGFKIEVDIIDGHKTGFYLDQRDSRAALERFSKDKTVLNCFSYTGTFSLYALRGGCKHVTNVDVSQPALDTAKRNVEHNNLDLDKVDFVKQDVFKLLRQYREDGVLFDTIVMDPPKFADNKAQLTGACRGYKDINMIAMQILKPGGTLLTFSCSGLMEQNLFQKVVADAALDAGKDLLIMERLNQAADHPIAGSYPEGFYLKGLICKVY.

The PUA domain occupies 2-79; the sequence is TSAVYLQAGR…EKEVIDQHFF (78 aa).

The protein belongs to the methyltransferase superfamily. RlmI family.

It is found in the cytoplasm. It catalyses the reaction cytidine(1962) in 23S rRNA + S-adenosyl-L-methionine = 5-methylcytidine(1962) in 23S rRNA + S-adenosyl-L-homocysteine + H(+). In terms of biological role, specifically methylates the cytosine at position 1962 (m5C1962) of 23S rRNA. The sequence is that of Ribosomal RNA large subunit methyltransferase I from Pseudoalteromonas translucida (strain TAC 125).